A 522-amino-acid chain; its full sequence is Glucans biosynthesis protein G (522 aa).

The first 33 residues, 1 to 33 (MPNNKFFVKSSKASLRWLGATVLLTLYALPSWA), serve as a signal peptide directing secretion.

Belongs to the OpgD/OpgG family.

The protein resides in the periplasm. It functions in the pathway glycan metabolism; osmoregulated periplasmic glucan (OPG) biosynthesis. Its function is as follows. Involved in the biosynthesis of osmoregulated periplasmic glucans (OPGs). This Sodalis glossinidius (strain morsitans) protein is Glucans biosynthesis protein G.